The primary structure comprises 250 residues: NAD(P)H-quinone oxidoreductase subunit K, chloroplastic (250 aa).

[4Fe-4S] cluster is bound by residues C67, C68, C132, and C163.

It belongs to the complex I 20 kDa subunit family. In terms of assembly, NDH is composed of at least 16 different subunits, 5 of which are encoded in the nucleus. The cofactor is [4Fe-4S] cluster.

The protein resides in the plastid. It is found in the chloroplast thylakoid membrane. The enzyme catalyses a plastoquinone + NADH + (n+1) H(+)(in) = a plastoquinol + NAD(+) + n H(+)(out). It catalyses the reaction a plastoquinone + NADPH + (n+1) H(+)(in) = a plastoquinol + NADP(+) + n H(+)(out). Functionally, NDH shuttles electrons from NAD(P)H:plastoquinone, via FMN and iron-sulfur (Fe-S) centers, to quinones in the photosynthetic chain and possibly in a chloroplast respiratory chain. The immediate electron acceptor for the enzyme in this species is believed to be plastoquinone. Couples the redox reaction to proton translocation, and thus conserves the redox energy in a proton gradient. This chain is NAD(P)H-quinone oxidoreductase subunit K, chloroplastic, found in Adiantum capillus-veneris (Maidenhair fern).